A 257-amino-acid polypeptide reads, in one-letter code: Pyridoxine 5'-phosphate synthase (257 aa).

Residue N6 participates in 3-amino-2-oxopropyl phosphate binding. Residue 8 to 9 (DH) coordinates 1-deoxy-D-xylulose 5-phosphate. R17 lines the 3-amino-2-oxopropyl phosphate pocket. Residue H41 is the Proton acceptor of the active site. The 1-deoxy-D-xylulose 5-phosphate site is built by R43 and H48. The active-site Proton acceptor is E68. Residue T98 coordinates 1-deoxy-D-xylulose 5-phosphate. Residue H210 is the Proton donor of the active site. 3-amino-2-oxopropyl phosphate contacts are provided by residues G211 and 232-233 (GQ).

It belongs to the PNP synthase family. Homooctamer; tetramer of dimers.

The protein resides in the cytoplasm. The catalysed reaction is 3-amino-2-oxopropyl phosphate + 1-deoxy-D-xylulose 5-phosphate = pyridoxine 5'-phosphate + phosphate + 2 H2O + H(+). Its pathway is cofactor biosynthesis; pyridoxine 5'-phosphate biosynthesis; pyridoxine 5'-phosphate from D-erythrose 4-phosphate: step 5/5. In terms of biological role, catalyzes the complicated ring closure reaction between the two acyclic compounds 1-deoxy-D-xylulose-5-phosphate (DXP) and 3-amino-2-oxopropyl phosphate (1-amino-acetone-3-phosphate or AAP) to form pyridoxine 5'-phosphate (PNP) and inorganic phosphate. This Campylobacter jejuni subsp. jejuni serotype O:6 (strain 81116 / NCTC 11828) protein is Pyridoxine 5'-phosphate synthase.